A 342-amino-acid chain; its full sequence is Mitochondrial sorting homolog (342 aa).

Over 1–6 (MTDRNE) the chain is Mitochondrial intermembrane. A helical membrane pass occupies residues 7-25 (LIGVAIRVVAAAAVSFLSV). Residues 26–342 (RYLVKYLDPN…AHLLVEETLD (317 aa)) are Cytoplasmic-facing. 124–131 (GPPGCGKT) contacts ATP.

It belongs to the AAA ATPase family.

It is found in the mitochondrion outer membrane. Its function is as follows. Involved in intramitochondrial sorting of proteins. This chain is Mitochondrial sorting homolog (mspn-1), found in Caenorhabditis elegans.